The following is a 170-amino-acid chain: Calcineurin subunit B type 1 (170 aa).

The N-myristoyl glycine moiety is linked to residue glycine 2. EF-hand domains are found at residues 18–46 (DEIKRLGKRFKKLDLDNSGSLSVEEFMSL), 50–85 (QQNPLVQRVIDIFDTDGNGEVDFKEFIEGVSQFSVK), 87–122 (DKEQKLRFAFRIYDMDKDGYISNGELFQVLKMMVGN), and 128–163 (QLQQIVDKTIINADKDGDGRISFEEFCAVVGGLDIH). The Ca(2+) site is built by aspartate 31, aspartate 33, serine 35, serine 37, glutamate 42, aspartate 63, aspartate 65, asparagine 67, glutamate 69, glutamate 74, aspartate 100, aspartate 102, aspartate 104, tyrosine 106, and glutamate 111. Tyrosine 106 is modified (phosphotyrosine). The segment at 131–136 (QIVDKT) is calcineurin A binding. Ca(2+) is bound by residues aspartate 141, aspartate 143, aspartate 145, arginine 147, and glutamate 152.

The protein belongs to the calcineurin regulatory subunit family. As to quaternary structure, forms a complex composed of a calmodulin-dependent catalytic subunit (also known as calcineurin A) and a regulatory Ca(2+)-binding subunit (also known as calcineurin B). There are three catalytic subunits, each encoded by a separate gene (PPP3CA, PPP3CB, and PPP3CC) and two regulatory subunits which are also encoded by separate genes (PPP3R1 and PPP3R2). The interaction between the 2 subunits is Ca(2+)-independent. Interacts with catalytic subunit PPP3CA/calcineurin A. Interacts with catalytic subunit PPP3CB/calcineurin A. Interacts with CIB1 (via C-terminal region); the interaction increases upon cardiomyocyte hypertrophy. Interacts with RCAN1. Interacts with SPATA33 (via PQIIIT motif).

It is found in the cytoplasm. Its subcellular location is the cytosol. It localises to the cell membrane. The protein resides in the sarcolemma. In terms of biological role, regulatory subunit of calcineurin, a calcium-dependent, calmodulin stimulated protein phosphatase. Confers calcium sensitivity. This is Calcineurin subunit B type 1 (PPP3R1) from Bos taurus (Bovine).